A 516-amino-acid chain; its full sequence is uncharacterized protein (516 aa).

The signal sequence occupies residues 1 to 22 (MLYRFWKTGLAIFMPGCILLSS). Residue Cys-23 is the site of N-palmitoyl cysteine attachment. The S-diacylglycerol cysteine moiety is linked to residue Cys-23.

Belongs to the MG067/MG068/MG395 family.

Its subcellular location is the cell membrane. This is an uncharacterized protein from Mycoplasma genitalium (strain ATCC 33530 / DSM 19775 / NCTC 10195 / G37) (Mycoplasmoides genitalium).